Reading from the N-terminus, the 122-residue chain is Large ribosomal subunit protein uL14 (122 aa).

The protein belongs to the universal ribosomal protein uL14 family. Part of the 50S ribosomal subunit. Forms a cluster with proteins L3 and L19. In the 70S ribosome, L14 and L19 interact and together make contacts with the 16S rRNA in bridges B5 and B8.

Its function is as follows. Binds to 23S rRNA. Forms part of two intersubunit bridges in the 70S ribosome. This Citrifermentans bemidjiense (strain ATCC BAA-1014 / DSM 16622 / JCM 12645 / Bem) (Geobacter bemidjiensis) protein is Large ribosomal subunit protein uL14.